We begin with the raw amino-acid sequence, 256 residues long: Probable galactose dehydrogenase GalD (256 aa).

NAD(+) contacts are provided by residues 20-23, 71-72, and Asn98; these read GGGS and DL. Residue Ser150 participates in substrate binding. Catalysis depends on Tyr163, which acts as the Proton acceptor. NAD(+) is bound by residues 163-167 and Ile196; that span reads YSTAK.

Belongs to the short-chain dehydrogenases/reductases (SDR) family.

Its function is as follows. Involved in the degradation of galactose via the DeLey-Doudoroff pathway. Catalyzes the oxidation of galactose in the presence of NAD(+). Uses NAD(+) as a hydrogen acceptor more efficiently than NADP(+). This is Probable galactose dehydrogenase GalD (galD) from Rhizobium meliloti (strain 1021) (Ensifer meliloti).